Consider the following 46-residue polypeptide: U1-plectoxin-Pt1f (46 aa).

Cystine bridges form between C4-C18, C11-C24, C17-C35, C21-C44, and C26-C33.

Belongs to the neurotoxin 02 (plectoxin) family. 02 (plectoxin) subfamily. As to expression, expressed by the venom gland.

The protein localises to the secreted. Its function is as follows. Potent toxin that may paralyze and/or kill insect pests such as H.virescens (lepidoptera), S.exigua (beet armyworm) and M.sexta (tobacco hornworm). This chain is U1-plectoxin-Pt1f, found in Plectreurys tristis (Spider).